A 429-amino-acid chain; its full sequence is Tubby-like F-box protein 5 (429 aa).

Residues 53-108 form the F-box domain; sequence TRWANLPAALLRDVMKKLDESESTWPARKQVVACAGVCKTWRLMCKDIVKSPEFSG. Residues 360-385 are disordered; that stretch reads QPGSGSDGGALATRPSLSPQQPEQSN. The segment covering 374–383 has biased composition (polar residues); it reads PSLSPQQPEQ.

It belongs to the TUB family. Mostly expressed in roots, flowers and siliques.

This is Tubby-like F-box protein 5 from Arabidopsis thaliana (Mouse-ear cress).